The chain runs to 801 residues: PR domain zinc finger protein 4 (801 aa).

An SET domain is found at 412–529 (KQLVLRQSIV…PENELLFYYS (118 aa)). The segment at 545 to 566 (HLCNCGKECNSYTEFKAHLTSH) adopts a C2H2-type 1; atypical zinc-finger fold. 4 C2H2-type zinc fingers span residues 618–640 (HKCD…LKIH), 646–668 (YRCT…MVIH), 674–696 (LKCD…VLIH), and 702–724 (IKCP…LNSH). The C2H2-type 6; atypical zinc finger occupies 730–752 (YVCEKCTKAYLTKYHLTRHLKTC). Residues 751–782 (TCKGPTSSSSAPEEEEEDDSEEEDLADSVGTE) are disordered. Residues 762-776 (PEEEEEDDSEEEDLA) show a composition bias toward acidic residues.

The protein belongs to the class V-like SAM-binding methyltransferase superfamily.

It localises to the nucleus. Its function is as follows. May function as a transcription factor involved in cell differentiation. The sequence is that of PR domain zinc finger protein 4 (PRDM4) from Pongo abelii (Sumatran orangutan).